Here is a 317-residue protein sequence, read N- to C-terminus: Ribose-phosphate pyrophosphokinase (317 aa).

Residues 41 to 43 (DME) and 100 to 101 (RQ) each bind ATP. Residues His134 and Asp174 each coordinate Mg(2+). Lys197 is an active-site residue. Residues Arg199, Asp223, and 227–231 (DSGGT) each bind D-ribose 5-phosphate.

It belongs to the ribose-phosphate pyrophosphokinase family. Class I subfamily. Homohexamer. It depends on Mg(2+) as a cofactor.

The protein localises to the cytoplasm. It carries out the reaction D-ribose 5-phosphate + ATP = 5-phospho-alpha-D-ribose 1-diphosphate + AMP + H(+). The protein operates within metabolic intermediate biosynthesis; 5-phospho-alpha-D-ribose 1-diphosphate biosynthesis; 5-phospho-alpha-D-ribose 1-diphosphate from D-ribose 5-phosphate (route I): step 1/1. Involved in the biosynthesis of the central metabolite phospho-alpha-D-ribosyl-1-pyrophosphate (PRPP) via the transfer of pyrophosphoryl group from ATP to 1-hydroxyl of ribose-5-phosphate (Rib-5-P). In Bradyrhizobium diazoefficiens (strain JCM 10833 / BCRC 13528 / IAM 13628 / NBRC 14792 / USDA 110), this protein is Ribose-phosphate pyrophosphokinase.